The primary structure comprises 185 residues: uncharacterized protein (185 aa).

N-acetylmethionine is present on Met1. 3 stretches are compositionally biased toward basic and acidic residues: residues 1–18, 26–47, and 59–71; these read MDAFSLKKDNRKKFQDKQ, TPSDRKYRLLNRQKEEKATTEE, and SNEDRYYEDPVLE. 2 disordered regions span residues 1 to 71 and 155 to 185; these read MDAF…PVLE and DHDRAGKKISAPSTDLPEELETDQDFLDGLL. Over residues 170–185 the composition is skewed to acidic residues; the sequence is LPEELETDQDFLDGLL.

This is an uncharacterized protein from Saccharomyces cerevisiae (strain ATCC 204508 / S288c) (Baker's yeast).